A 417-amino-acid polypeptide reads, in one-letter code: Phosphoglycerate kinase 1 (417 aa).

At Ser2 the chain carries N-acetylserine. Phosphoserine occurs at positions 2 and 4. At Lys6 the chain carries N6-succinyllysine. Residue Lys11 is modified to N6-acetyllysine. (2R)-3-phosphoglycerate contacts are provided by Val23, Asp24, Phe25, Asn26, Gln38, Arg39, Ser62, His63, Gly65, and Arg66. The segment at 38-43 (QRIKAA) is mitochondrial targeting region exposed following cis-trans isomerization by PIN1 and recognized by the TOM complex for mitochondrial translocation of the protein. Position 75 is an N6-acetyllysine (Lys75). At Tyr76 the chain carries Phosphotyrosine. Residues Lys86 and Lys91 each carry the N6-acetyllysine modification. Lys97 carries the post-translational modification N6-(2-hydroxyisobutyryl)lysine; alternate. Lys97 bears the N6-acetyllysine; alternate mark. The (2R)-3-phosphoglycerate site is built by Leu122 and Arg123. Lys131 is subject to N6-acetyllysine; alternate. Position 131 is an N6-malonyllysine; alternate (Lys131). Lys146 is subject to N6-acetyllysine. (2R)-3-phosphoglycerate-binding residues include His170 and Arg171. An N6-succinyllysine modification is found at Lys191. Tyr196 carries the phosphotyrosine modification. Lys199 carries the post-translational modification N6-acetyllysine. Phosphoserine is present on Ser203. Gly214 serves as a coordination point for ADP. Gly214 contributes to the CDP binding site. The AMP site is built by Ala215 and Lys216. Position 215 (Ala215) interacts with ATP. Ala215 lines the Mg(2+) pocket. N6-(2-hydroxyisobutyryl)lysine is present on Lys216. Positions 218 and 219 each coordinate Mg(2+). CDP is bound at residue Asp219. Lys220 provides a ligand contact to AMP. Lys220 serves as a coordination point for ATP. The residue at position 220 (Lys220) is an N6-(2-hydroxyisobutyryl)lysine. Gly238 contributes to the ADP binding site. CDP is bound at residue Gly238. Residue Gly239 participates in AMP binding. An ATP-binding site is contributed by Gly239. Lys267 and Lys291 each carry N6-acetyllysine. Gly313 provides a ligand contact to AMP. ATP is bound at residue Gly313. At Lys323 the chain carries N6-(2-hydroxyisobutyryl)lysine. The CDP site is built by Gly338, Val340, and Phe343. Phe343 is a binding site for ADP. Position 344 (Glu344) interacts with AMP. Positions 344, 375, and 376 each coordinate ATP. Mg(2+) is bound at residue Asp375.

The protein belongs to the phosphoglycerate kinase family. Monomer. Interacts with kinase MAPK1/ERK2; the interaction is direct, occurs under hypoxic conditions, and promotes its interaction with PIN1. Interacts with peptidyl-prolyl cis-trans isomerase PIN1; the interaction is direct, occurs under hypoxic conditions, and targets the protein to the mitochondrion by promoting interactions with the TOM complex. Interacts with mitochondrial circRNA mcPGK1 (via its 2nd stem-loop); the interaction is direct and targets the protein to the mitochondrion by promoting interactions with the TOM complex. Interacts with pyruvate dehydrogenase kinase PDK1; the interaction is direct, occurs under hypoxic conditions and leads to PDK1-mediated inhibition of pyruvate dehydrogenase complex activity. Mg(2+) is required as a cofactor. In terms of processing, phosphorylated at Ser-203 by MAPK1/ERK2 under hypoxic conditions, which promotes its mitochondrial targeting.

It is found in the cytoplasm. The protein localises to the cytosol. The protein resides in the mitochondrion matrix. It carries out the reaction (2R)-3-phosphoglycerate + ATP = (2R)-3-phospho-glyceroyl phosphate + ADP. The enzyme catalyses L-seryl-[protein] + ATP = O-phospho-L-seryl-[protein] + ADP + H(+). The protein operates within carbohydrate degradation; glycolysis; pyruvate from D-glyceraldehyde 3-phosphate: step 2/5. Catalyzes one of the two ATP producing reactions in the glycolytic pathway via the reversible conversion of 1,3-diphosphoglycerate to 3-phosphoglycerate. Both L- and D- forms of purine and pyrimidine nucleotides can be used as substrates, but the activity is much lower on pyrimidines. In addition to its role as a glycolytic enzyme, it seems that PGK-1 acts as a polymerase alpha cofactor protein (primer recognition protein). Acts as a protein kinase when localized to the mitochondrion where it phosphorylates pyruvate dehydrogenase kinase PDK1 to inhibit pyruvate dehydrogenase complex activity and suppress the formation of acetyl-coenzyme A from pyruvate, and consequently inhibit oxidative phosphorylation and promote glycolysis. May play a role in sperm motility. This is Phosphoglycerate kinase 1 (PGK1) from Notamacropus eugenii (Tammar wallaby).